Consider the following 786-residue polypeptide: Endonuclease MutS2 (786 aa).

332–339 (GPNTGGKT) serves as a coordination point for ATP. Residues 711-786 (IDLRGMDSEE…GTGVTVVILK (76 aa)) form the Smr domain.

The protein belongs to the DNA mismatch repair MutS family. MutS2 subfamily. In terms of assembly, homodimer. Binds to stalled ribosomes, contacting rRNA.

In terms of biological role, endonuclease that is involved in the suppression of homologous recombination and thus may have a key role in the control of bacterial genetic diversity. Its function is as follows. Acts as a ribosome collision sensor, splitting the ribosome into its 2 subunits. Detects stalled/collided 70S ribosomes which it binds and splits by an ATP-hydrolysis driven conformational change. Acts upstream of the ribosome quality control system (RQC), a ribosome-associated complex that mediates the extraction of incompletely synthesized nascent chains from stalled ribosomes and their subsequent degradation. Probably generates substrates for RQC. This is Endonuclease MutS2 from Clostridium perfringens (strain SM101 / Type A).